The sequence spans 295 residues: Ribosome production factor 1 (295 aa).

A disordered region spans residues 24–47; it reads HEKNKERHTMRRKRAKEERENPEL. The segment covering 38–47 has biased composition (basic and acidic residues); that stretch reads AKEERENPEL. The 184-residue stretch at 93–276 folds into the Brix domain; that stretch reads PKIFLTTNVN…LKRLQRGIKE (184 aa). Residues 254–271 are RNA-binding; that stretch reads VGLQELGPQFTLKLKRLQ.

Part of a complex that includes BRX1, RPF1, RPF2 and SSF1 or SSF2.

It is found in the nucleus. The protein localises to the nucleolus. In terms of biological role, essential protein. Required for biogenesis of the 60S ribosomal subunit. This Saccharomyces cerevisiae (strain ATCC 204508 / S288c) (Baker's yeast) protein is Ribosome production factor 1 (RPF1).